The following is a 65-amino-acid chain: Large ribosomal subunit protein bL35 (65 aa).

The protein belongs to the bacterial ribosomal protein bL35 family.

The chain is Large ribosomal subunit protein bL35 from Rubrobacter xylanophilus (strain DSM 9941 / JCM 11954 / NBRC 16129 / PRD-1).